A 182-amino-acid chain; its full sequence is Gremlin-1 (182 aa).

An N-terminal signal peptide occupies residues 1 to 24; sequence MNCLVYALGSLFLLSGLLLPSSEG. Residues 23–65 form a disordered region; sequence EGKKKVSGSQGAIPPPDKGQPNDSEQGQAQPGDRVRGKGKGQA. Asn44 carries N-linked (GlcNAc...) asparagine glycosylation. Cystine bridges form between Cys92–Cys142, Cys106–Cys156, Cys116–Cys174, and Cys120–Cys176. One can recognise a CTCK domain in the interval 92–182; the sequence is CKTQPLKQTI…QCRCISIDLD (91 aa).

The protein belongs to the DAN family.

It is found in the secreted. Functionally, cytokine that has an axial patterning activity. Acts like BMP antagonist in embryonic explants. Blocks the BMP2 activity. The polypeptide is Gremlin-1 (grem1) (Xenopus laevis (African clawed frog)).